A 465-amino-acid chain; its full sequence is Asparagine--tRNA ligase (465 aa).

It belongs to the class-II aminoacyl-tRNA synthetase family. In terms of assembly, homodimer.

It localises to the cytoplasm. It catalyses the reaction tRNA(Asn) + L-asparagine + ATP = L-asparaginyl-tRNA(Asn) + AMP + diphosphate + H(+). The polypeptide is Asparagine--tRNA ligase (Clostridium perfringens (strain SM101 / Type A)).